Consider the following 101-residue polypeptide: uncharacterized protein (101 aa).

A helical transmembrane segment spans residues 58-80 (VFPSLNIIILMSDALMFFLRSSI).

The protein resides in the membrane. This is an uncharacterized protein from Saccharomyces cerevisiae (strain ATCC 204508 / S288c) (Baker's yeast).